The following is a 176-amino-acid chain: Ribosome maturation factor RimM (176 aa).

The region spanning 94–176 is the PRC barrel domain; that stretch reads KDEFFYFEIL…RFGFEILQNS (83 aa).

It belongs to the RimM family. As to quaternary structure, binds ribosomal protein uS19.

Its subcellular location is the cytoplasm. An accessory protein needed during the final step in the assembly of 30S ribosomal subunit, possibly for assembly of the head region. Essential for efficient processing of 16S rRNA. May be needed both before and after RbfA during the maturation of 16S rRNA. It has affinity for free ribosomal 30S subunits but not for 70S ribosomes. In Campylobacter hominis (strain ATCC BAA-381 / DSM 21671 / CCUG 45161 / LMG 19568 / NCTC 13146 / CH001A), this protein is Ribosome maturation factor RimM.